Reading from the N-terminus, the 450-residue chain is Phosphoglucosamine mutase (450 aa).

Residue serine 102 is the Phosphoserine intermediate of the active site. Mg(2+) is bound by residues serine 102, aspartate 244, aspartate 246, and aspartate 248. Residue serine 102 is modified to Phosphoserine.

This sequence belongs to the phosphohexose mutase family. Requires Mg(2+) as cofactor. In terms of processing, activated by phosphorylation.

The enzyme catalyses alpha-D-glucosamine 1-phosphate = D-glucosamine 6-phosphate. Functionally, catalyzes the conversion of glucosamine-6-phosphate to glucosamine-1-phosphate. This is Phosphoglucosamine mutase from Nitratidesulfovibrio vulgaris (strain ATCC 29579 / DSM 644 / CCUG 34227 / NCIMB 8303 / VKM B-1760 / Hildenborough) (Desulfovibrio vulgaris).